A 914-amino-acid polypeptide reads, in one-letter code: DNA mismatch repair protein MutS (914 aa).

Residues 28-74 (NTNSVKDSNLNDEELSKNAELRPRKRKKSVLLQNSVGEQTEDFSNDE) form a disordered region. 726–733 (GPNASGKS) provides a ligand contact to ATP.

It belongs to the DNA mismatch repair MutS family.

Functionally, this protein is involved in the repair of mismatches in DNA. It is possible that it carries out the mismatch recognition step. This protein has a weak ATPase activity. The chain is DNA mismatch repair protein MutS from Prochlorococcus marinus (strain SARG / CCMP1375 / SS120).